The sequence spans 173 residues: Bifunctional protein PyrR (173 aa).

Residues 40–41 (TR), 97–105 (DDVLYTGRT), and R130 each bind substrate. Residues 93–105 (VILIDDVLYTGRT) carry the PRPP-binding motif.

The protein belongs to the purine/pyrimidine phosphoribosyltransferase family. PyrR subfamily. Homodimer and homohexamer; in equilibrium.

It catalyses the reaction UMP + diphosphate = 5-phospho-alpha-D-ribose 1-diphosphate + uracil. In terms of biological role, regulates transcriptional attenuation of the pyrimidine nucleotide (pyr) operon by binding in a uridine-dependent manner to specific sites on pyr mRNA. This disrupts an antiterminator hairpin in the RNA and favors formation of a downstream transcription terminator, leading to a reduced expression of downstream genes. Also displays a weak uracil phosphoribosyltransferase activity which is not physiologically significant. This is Bifunctional protein PyrR from Streptococcus pyogenes serotype M6 (strain ATCC BAA-946 / MGAS10394).